The sequence spans 620 residues: Probably inactive leucine-rich repeat receptor-like protein kinase At5g48380 (620 aa).

The first 27 residues, 1–27 (MMMGRLVFVIWLYNCLCLLLLSSLVDA), serve as a signal peptide directing secretion. Over 28 to 228 (DQANIDCLRT…SASSSRGKVV (201 aa)) the chain is Extracellular. 4 N-linked (GlcNAc...) asparagine glycosylation sites follow: asparagine 56, asparagine 111, asparagine 119, and asparagine 147. 4 LRR repeats span residues 101-124 (DLTG…STLI), 126-148 (LVTI…ISNI), 150-172 (FLNT…LAQL), and 174-196 (RLKT…NQTL). An N-linked (GlcNAc...) asparagine glycan is attached at asparagine 193. The chain crosses the membrane as a helical span at residues 229–249 (IIAAVGGLTAAALVVGVVLFF). The Cytoplasmic portion of the chain corresponds to 250–620 (YFRKLGAVRK…DFIEELIVAR (371 aa)). Threonine 300 is subject to Phosphothreonine. Positions 303 to 596 (FKKDNIIATG…RAIGESYNFT (294 aa)) constitute a Protein kinase domain. Residues 309–317 (IATGRTGTM) and lysine 331 each bind ATP. Threonine 463 carries the post-translational modification Phosphothreonine. Tyrosine 479 is subject to Phosphotyrosine. Position 482 is a phosphothreonine (threonine 482).

Belongs to the protein kinase superfamily. Ser/Thr protein kinase family.

It is found in the cell membrane. In Arabidopsis thaliana (Mouse-ear cress), this protein is Probably inactive leucine-rich repeat receptor-like protein kinase At5g48380.